The primary structure comprises 157 residues: Ribosome-binding factor A (157 aa).

The disordered stretch occupies residues 127-157; it reads QQQFGSEDASVEDEVLGDDVADDADETEGKD. The segment covering 135–157 has biased composition (acidic residues); the sequence is ASVEDEVLGDDVADDADETEGKD.

The protein belongs to the RbfA family. In terms of assembly, monomer. Binds 30S ribosomal subunits, but not 50S ribosomal subunits or 70S ribosomes.

The protein localises to the cytoplasm. Functionally, one of several proteins that assist in the late maturation steps of the functional core of the 30S ribosomal subunit. Associates with free 30S ribosomal subunits (but not with 30S subunits that are part of 70S ribosomes or polysomes). Required for efficient processing of 16S rRNA. May interact with the 5'-terminal helix region of 16S rRNA. This is Ribosome-binding factor A from Shewanella baltica (strain OS155 / ATCC BAA-1091).